Consider the following 352-residue polypeptide: MGESEKISVGIIGASGYGGVQLVRLLQEHPLVDIVYLGGKGSAGQTYAEIYPHLGHAVDLTIEPIDTEAIASRCQVVFLGLPNGLACDIAPPLIAKGCKVLDLSADYRFKNLETYSSWYNKDRSDLDTAKTAVYGLPELYREEIKSASLIGCPGCYPTASLMALSPLLKQGLILPETTIIDAKSGTSGGGRQAKTHLLLAEAEGSFGAYGVAKHRHTPEIEQISSDLAGHEVKVQFTPHLIPMVRGILSTVYATLRDPGLVREDLLTIYSAFYRSSPFVKILPNGLYPQTKWACGTNLCYLGIETDPRTDRVIVLSAIDNLIKGQAGQAVQCLNIMMGWEETLGLPQLCFYP.

Cysteine 155 is a catalytic residue.

Belongs to the NAGSA dehydrogenase family. Type 1 subfamily.

Its subcellular location is the cytoplasm. It carries out the reaction N-acetyl-L-glutamate 5-semialdehyde + phosphate + NADP(+) = N-acetyl-L-glutamyl 5-phosphate + NADPH + H(+). It functions in the pathway amino-acid biosynthesis; L-arginine biosynthesis; N(2)-acetyl-L-ornithine from L-glutamate: step 3/4. In terms of biological role, catalyzes the NADPH-dependent reduction of N-acetyl-5-glutamyl phosphate to yield N-acetyl-L-glutamate 5-semialdehyde. This Crocosphaera subtropica (strain ATCC 51142 / BH68) (Cyanothece sp. (strain ATCC 51142)) protein is N-acetyl-gamma-glutamyl-phosphate reductase.